The following is a 287-amino-acid chain: Large ribosomal subunit protein uL2 (287 aa).

A disordered region spans residues 221 to 287; sequence RGSVMNPCDH…SKRSRGGRDS (67 aa). The segment covering 258–287 has biased composition (basic residues); it reads KTRKKNKPSNKLVVRRRRRVSKRSRGGRDS.

The protein belongs to the universal ribosomal protein uL2 family. As to quaternary structure, part of the 50S ribosomal subunit. Forms a bridge to the 30S subunit in the 70S ribosome.

In terms of biological role, one of the primary rRNA binding proteins. Required for association of the 30S and 50S subunits to form the 70S ribosome, for tRNA binding and peptide bond formation. It has been suggested to have peptidyltransferase activity; this is somewhat controversial. Makes several contacts with the 16S rRNA in the 70S ribosome. The chain is Large ribosomal subunit protein uL2 from Prochlorococcus marinus (strain AS9601).